The following is a 534-amino-acid chain: Arginine--tRNA ligase (534 aa).

The 'HIGH' region motif lies at 120 to 130 (ANPTGFLHLGH).

Belongs to the class-I aminoacyl-tRNA synthetase family. In terms of assembly, monomer.

It localises to the cytoplasm. It carries out the reaction tRNA(Arg) + L-arginine + ATP = L-arginyl-tRNA(Arg) + AMP + diphosphate. In Mesomycoplasma hyopneumoniae (strain 232) (Mycoplasma hyopneumoniae), this protein is Arginine--tRNA ligase.